A 156-amino-acid polypeptide reads, in one-letter code: Myosin regulatory light chain B, smooth adductor muscle (156 aa).

At Ala1 the chain carries Blocked amino end (Ala). EF-hand domains follow at residues 15–50 (KQIQ…LGRT) and 84–119 (DTEE…MGDN). 4 residues coordinate Ca(2+): Asp28, Asn30, Asp32, and Asp39.

Functionally, in molluscan muscle, calcium regulation is associated with myosin rather than with actin. Muscle myosin contains two types of light chains: the catalytic light chain, essential for ATPase activity, and the regulatory light chain, a calcium-binding protein responsible for Ca(2+) dependent binding and Ca(2+) dependent Mg-ATPase activity. This is Myosin regulatory light chain B, smooth adductor muscle from Mizuhopecten yessoensis (Japanese scallop).